The following is a 375-amino-acid chain: NADH-ubiquinone oxidoreductase 40 kDa subunit, mitochondrial (375 aa).

A mitochondrion-targeting transit peptide spans 1-26; sequence MAPLTAAMRSTPRIIVSNAFGFQRRA.

It belongs to the complex I NDUFA9 subunit family. Complex I is composed of about 40 different subunits. FAD serves as cofactor.

Its subcellular location is the mitochondrion matrix. Its function is as follows. Accessory subunit of the mitochondrial membrane respiratory chain NADH dehydrogenase (Complex I), that is believed not to be involved in catalysis. Complex I functions in the transfer of electrons from NADH to the respiratory chain. The immediate electron acceptor for the enzyme is believed to be ubiquinone. This chain is NADH-ubiquinone oxidoreductase 40 kDa subunit, mitochondrial (nuo40), found in Neurospora crassa (strain ATCC 24698 / 74-OR23-1A / CBS 708.71 / DSM 1257 / FGSC 987).